We begin with the raw amino-acid sequence, 141 residues long: MPVIPALGEAKGEVLPPGDTTTIIPLNWMLKSPPGHFGLLLLLSQQAKNGVMVLAGVTDPEYQDEISLLLHNEGHLKEVKMEGARLGLPGRAESLEHQVQSHLNMIAQSQRTFQKKDAGKAIILSKLTQEQKTKHCMFSLH.

It belongs to the dUTPase family.

The protein is Putative inactive deoxyuridine 5'-triphosphate nucleotidohydrolase-like protein FLJ16323 of Homo sapiens (Human).